We begin with the raw amino-acid sequence, 411 residues long: Serine hydroxymethyltransferase (411 aa).

Position 120 to 122 (120 to 122 (GHL)) interacts with (6S)-5,6,7,8-tetrahydrofolate. Position 225 is an N6-(pyridoxal phosphate)lysine (K225). 350–352 (SPF) provides a ligand contact to (6S)-5,6,7,8-tetrahydrofolate.

This sequence belongs to the SHMT family. In terms of assembly, homodimer. It depends on pyridoxal 5'-phosphate as a cofactor.

It is found in the cytoplasm. The catalysed reaction is (6R)-5,10-methylene-5,6,7,8-tetrahydrofolate + glycine + H2O = (6S)-5,6,7,8-tetrahydrofolate + L-serine. Its pathway is one-carbon metabolism; tetrahydrofolate interconversion. It participates in amino-acid biosynthesis; glycine biosynthesis; glycine from L-serine: step 1/1. In terms of biological role, catalyzes the reversible interconversion of serine and glycine with tetrahydrofolate (THF) serving as the one-carbon carrier. This reaction serves as the major source of one-carbon groups required for the biosynthesis of purines, thymidylate, methionine, and other important biomolecules. Also exhibits THF-independent aldolase activity toward beta-hydroxyamino acids, producing glycine and aldehydes, via a retro-aldol mechanism. In Lactobacillus acidophilus (strain ATCC 700396 / NCK56 / N2 / NCFM), this protein is Serine hydroxymethyltransferase.